We begin with the raw amino-acid sequence, 203 residues long: GTP-binding protein YPTM2 (203 aa).

GTP contacts are provided by residues 15–23, 33–40, 63–67, 121–124, and 151–153; these read GDSGVGKSC, YLDSYIST, DTAGQ, NKSD, and SAK. The Effector region motif lies at 37 to 45; sequence YISTIGVDF. S-geranylgeranyl cysteine attachment occurs at residues Cys200 and Cys201.

It belongs to the small GTPase superfamily. Rab family. Its expression is weak in stems, higher in roots, leaves and coleoptiles, but highest in flowers.

The protein localises to the cell membrane. In terms of biological role, protein transport. Probably involved in vesicular traffic. The chain is GTP-binding protein YPTM2 (YPTM2) from Zea mays (Maize).